The sequence spans 305 residues: Auxin-responsive protein IAA27 (305 aa).

The EAR-like (transcriptional repression) signature appears at 45–49 (LRLGL). 2 disordered regions span residues 96 to 119 (TTAT…GKST) and 155 to 180 (KNSM…AKSG). Over residues 155-170 (KNSMASSQSQKPGNNS) the composition is skewed to polar residues. A PB1 domain is found at 185 to 287 (CLYVKVSMEG…SCKKLRIMKS (103 aa)).

Belongs to the Aux/IAA family. Homodimers and heterodimers. Interacts with phytochrome A. Interacts with TPL.

It is found in the nucleus. In terms of biological role, aux/IAA proteins are short-lived transcriptional factors that function as repressors of early auxin response genes at low auxin concentrations. Repression is thought to result from the interaction with auxin response factors (ARFs), proteins that bind to the auxin-responsive promoter element (AuxRE). Formation of heterodimers with ARF proteins may alter their ability to modulate early auxin response genes expression. The protein is Auxin-responsive protein IAA27 (IAA27) of Arabidopsis thaliana (Mouse-ear cress).